The sequence spans 1002 residues: Chitin synthase II (1002 aa).

Disordered stretches follow at residues 1 to 165 (MDRP…GRTS) and 178 to 209 (LDGS…SGSQ). A compositionally biased stretch (low complexity) spans 63 to 78 (SYQPSVVSSHSRSASV). Asn123 carries an N-linked (GlcNAc...) asparagine glycan. An N-linked (GlcNAc...) asparagine glycan is attached at Asn336. Transmembrane regions (helical) follow at residues 627–647 (WLNG…QILA), 669–689 (LLFT…VAGG), 704–724 (SVIF…QFIL), 740–760 (SMII…YIVV), 780–800 (LIVS…LYLE), 808–828 (SLQY…YAFC), 906–926 (YMVV…SEIY), and 940–960 (ILWA…TFAI).

This sequence belongs to the chitin synthase family. Class II subfamily. As to expression, expressed in hyphal bodies.

Its subcellular location is the cell membrane. It catalyses the reaction [(1-&gt;4)-N-acetyl-beta-D-glucosaminyl](n) + UDP-N-acetyl-alpha-D-glucosamine = [(1-&gt;4)-N-acetyl-beta-D-glucosaminyl](n+1) + UDP + H(+). Polymerizes chitin, a structural polymer of the cell wall and septum, by transferring the sugar moiety of UDP-GlcNAc to the non-reducing end of the growing chitin polymer. Contributes to the production of conidia and the ability of fungal conidia to germinate. Involved in fungal stress tolerances. The polypeptide is Chitin synthase II (Metarhizium acridum (strain CQMa 102)).